Reading from the N-terminus, the 236-residue chain is 2-phospho-L-lactate guanylyltransferase (236 aa).

The protein belongs to the CofC family. As to quaternary structure, homodimer.

The enzyme catalyses (2S)-2-phospholactate + GTP + H(+) = (2S)-lactyl-2-diphospho-5'-guanosine + diphosphate. It functions in the pathway cofactor biosynthesis; coenzyme F420 biosynthesis. Guanylyltransferase that catalyzes the activation of (2S)-2-phospholactate (2-PL) as (2S)-lactyl-2-diphospho-5'-guanosine, via the condensation of 2-PL with GTP. It is involved in the biosynthesis of coenzyme F420, a hydride carrier cofactor. The protein is 2-phospho-L-lactate guanylyltransferase of Natrialba magadii (strain ATCC 43099 / DSM 3394 / CCM 3739 / CIP 104546 / IAM 13178 / JCM 8861 / NBRC 102185 / NCIMB 2190 / MS3) (Natronobacterium magadii).